The following is a 103-amino-acid chain: Large ribosomal subunit protein bL21 (103 aa).

The protein belongs to the bacterial ribosomal protein bL21 family. Part of the 50S ribosomal subunit. Contacts protein L20.

Functionally, this protein binds to 23S rRNA in the presence of protein L20. The polypeptide is Large ribosomal subunit protein bL21 (Amoebophilus asiaticus (strain 5a2)).